The primary structure comprises 354 residues: Ferrochelatase (354 aa).

Fe cation is bound by residues His204 and Glu306.

It belongs to the ferrochelatase family.

It is found in the cytoplasm. The catalysed reaction is heme b + 2 H(+) = protoporphyrin IX + Fe(2+). It functions in the pathway porphyrin-containing compound metabolism; protoheme biosynthesis; protoheme from protoporphyrin-IX: step 1/1. Functionally, catalyzes the ferrous insertion into protoporphyrin IX. This is Ferrochelatase from Coxiella burnetii (strain Dugway 5J108-111).